The chain runs to 466 residues: MEVKLEEHFNKTFVTENNTAASQNTASPAWEDYRGTENNTSAARNTAFPVWEDYRGSVDDLQYFLIGLYTFVSLLGFMGNLLILMAVMKKRNQKTTVNFLIGNLAFSDILVVLFCSPFTLTSVLLDQWMFGKAMCHIMPFLQCVSVLVSTLILISIAIVRYHMIKHPISNNLTANHGYFLIATVWTLGFAICSPLPVFHSLVELKETFGSALLSSKYLCVESWPSDSYRIAFTISLLLVQYILPLVCLTVSHTSVCRSISCGLSHKENRLEENEMINLTLHPSKKSRDQAKPPSTQKWSYSFIRKHRRRYSKKTACVLPAPAGPSQEKHLTVPENPGSVRSQLSPSSKVIPGVPICFEVKPEESSDAQEMRVKRSLTRIKKRSRSVFYRLTILILVFAVSWMPLHVFHVVTDFNDNLISNRHFKLVYCICHLLGMMSCCLNPILYGFLNNGIKADLRALIHCLHMS.

Residues 1-63 (MEVKLEEHFN…YRGSVDDLQY (63 aa)) are Extracellular-facing. N-linked (GlcNAc...) asparagine glycosylation is found at asparagine 10, asparagine 17, asparagine 38, and asparagine 39. A helical transmembrane segment spans residues 64 to 84 (FLIGLYTFVSLLGFMGNLLIL). Over 85–98 (MAVMKKRNQKTTVN) the chain is Cytoplasmic. A helical transmembrane segment spans residues 99 to 119 (FLIGNLAFSDILVVLFCSPFT). Topologically, residues 120 to 138 (LTSVLLDQWMFGKAMCHIM) are extracellular. Cysteine 135 and cysteine 219 are joined by a disulfide. Residues 139–159 (PFLQCVSVLVSTLILISIAIV) form a helical membrane-spanning segment. The Cytoplasmic segment spans residues 160 to 177 (RYHMIKHPISNNLTANHG). The helical transmembrane segment at 178–198 (YFLIATVWTLGFAICSPLPVF) threads the bilayer. Residues 199–229 (HSLVELKETFGSALLSSKYLCVESWPSDSYR) are Extracellular-facing. The chain crosses the membrane as a helical span at residues 230–250 (IAFTISLLLVQYILPLVCLTV). Residues 251–389 (SHTSVCRSIS…KKRSRSVFYR (139 aa)) are Cytoplasmic-facing. The disordered stretch occupies residues 323-346 (GPSQEKHLTVPENPGSVRSQLSPS). Residues 390–410 (LTILILVFAVSWMPLHVFHVV) traverse the membrane as a helical segment. The Extracellular portion of the chain corresponds to 411 to 427 (TDFNDNLISNRHFKLVY). A helical transmembrane segment spans residues 428–448 (CICHLLGMMSCCLNPILYGFL). Residues 449–466 (NNGIKADLRALIHCLHMS) lie on the Cytoplasmic side of the membrane. Residue cysteine 462 is the site of S-palmitoyl cysteine attachment.

Belongs to the G-protein coupled receptor 1 family.

The protein localises to the cell membrane. Receptor for neuropeptide Y and peptide YY. The activity of this receptor is mediated by G proteins that inhibit adenylate cyclase activity. Seems to be associated with food intake. Could be involved in feeding disorders. The protein is Neuropeptide Y receptor type 5 (Npy5r) of Mus musculus (Mouse).